Reading from the N-terminus, the 308-residue chain is D-alanine--D-alanine ligase (308 aa).

In terms of domain architecture, ATP-grasp spans 105-302 (KAIFRSLGLA…FPDLCERILD (198 aa)). 133–188 (DLPFGLPCVVKPAGEGSSVGVHLVNEAAELGPACRDAASHAGDVIVERYVKGTEVD) is a binding site for ATP. Mg(2+) contacts are provided by aspartate 256, glutamate 269, and asparagine 271.

Belongs to the D-alanine--D-alanine ligase family. Mg(2+) serves as cofactor. Mn(2+) is required as a cofactor.

It localises to the cytoplasm. The enzyme catalyses 2 D-alanine + ATP = D-alanyl-D-alanine + ADP + phosphate + H(+). It participates in cell wall biogenesis; peptidoglycan biosynthesis. In terms of biological role, cell wall formation. The protein is D-alanine--D-alanine ligase of Anaeromyxobacter sp. (strain K).